The chain runs to 337 residues: Transaldolase (337 aa).

The Nuclear localization signal motif lies at 1-10 (MSSSPVKRQR). N6-acetyllysine is present on Lys115. The Schiff-base intermediate with substrate role is filled by Lys142. Lys219 carries the N6-acetyllysine modification. Ser237 and Ser256 each carry phosphoserine. An N6-acetyllysine mark is found at Lys269, Lys286, and Lys321.

Belongs to the transaldolase family. Type 1 subfamily. In terms of assembly, homodimer. Heterodimer with isoform 2. Interacts with KPNA1 and KPNA4.

Its subcellular location is the nucleus. It is found in the cytoplasm. It catalyses the reaction D-sedoheptulose 7-phosphate + D-glyceraldehyde 3-phosphate = D-erythrose 4-phosphate + beta-D-fructose 6-phosphate. The protein operates within carbohydrate degradation; pentose phosphate pathway; D-glyceraldehyde 3-phosphate and beta-D-fructose 6-phosphate from D-ribose 5-phosphate and D-xylulose 5-phosphate (non-oxidative stage): step 2/3. In terms of biological role, catalyzes the rate-limiting step of the non-oxidative phase in the pentose phosphate pathway. Catalyzes the reversible conversion of sedheptulose-7-phosphate and D-glyceraldehyde 3-phosphate into erythrose-4-phosphate and beta-D-fructose 6-phosphate. Not only acts as a pentose phosphate pathway enzyme, but also affects other metabolite pathways by altering its subcellular localization between the nucleus and the cytoplasm. The polypeptide is Transaldolase (Homo sapiens (Human)).